The chain runs to 187 residues: MSDFEKLQETVYQLLELVGENPDREGLLDTPKRVAKMYQEVFSGLGRDPKDEFTAVFSEGHEEVVLVKDIPFHSMCEHHLLPFYGVAHVAYLPSNGKVTGLSKLARAVEVASKRPQLQERLTAQIATALDEALSPEGVFVMVEAEHMCMTMRGIKKPGSKTITTVAKGIYKENVHQRQEILSMIHHD.

The Zn(2+) site is built by cysteine 76, histidine 79, and cysteine 148.

Belongs to the GTP cyclohydrolase I family. In terms of assembly, homomer.

It catalyses the reaction GTP + H2O = 7,8-dihydroneopterin 3'-triphosphate + formate + H(+). The protein operates within cofactor biosynthesis; 7,8-dihydroneopterin triphosphate biosynthesis; 7,8-dihydroneopterin triphosphate from GTP: step 1/1. The polypeptide is GTP cyclohydrolase 1 (Streptococcus gordonii (strain Challis / ATCC 35105 / BCRC 15272 / CH1 / DL1 / V288)).